A 223-amino-acid polypeptide reads, in one-letter code: MHLLIAAAGSGRRMGADRNKLLLAVHGRPVLAWTLEAAGAAQSIDWIGVIGQPLDHSAMAALFHHAGQPVTWIEGGSTRQESVERGLQALPGDARHVLIHDGARCLVAPQVFNRCAEALLEGGAVIAATPVSDTIKRVDAQGVITDTPDRSELWAAQTPQGFSVSELREGHAQARARNWVVTDDASLFERLGWPVRVLDAGPGNIKVTTPFDLTVAAAVLAQR.

The protein belongs to the IspD/TarI cytidylyltransferase family. IspD subfamily.

The enzyme catalyses 2-C-methyl-D-erythritol 4-phosphate + CTP + H(+) = 4-CDP-2-C-methyl-D-erythritol + diphosphate. It participates in isoprenoid biosynthesis; isopentenyl diphosphate biosynthesis via DXP pathway; isopentenyl diphosphate from 1-deoxy-D-xylulose 5-phosphate: step 2/6. Functionally, catalyzes the formation of 4-diphosphocytidyl-2-C-methyl-D-erythritol from CTP and 2-C-methyl-D-erythritol 4-phosphate (MEP). In Synechococcus sp. (strain WH7803), this protein is 2-C-methyl-D-erythritol 4-phosphate cytidylyltransferase.